The chain runs to 131 residues: Holo-[acyl-carrier-protein] synthase (131 aa).

2 residues coordinate Mg(2+): aspartate 9 and glutamate 58.

This sequence belongs to the P-Pant transferase superfamily. AcpS family. It depends on Mg(2+) as a cofactor.

It localises to the cytoplasm. It catalyses the reaction apo-[ACP] + CoA = holo-[ACP] + adenosine 3',5'-bisphosphate + H(+). In terms of biological role, transfers the 4'-phosphopantetheine moiety from coenzyme A to a Ser of acyl-carrier-protein. In Salmonella arizonae (strain ATCC BAA-731 / CDC346-86 / RSK2980), this protein is Holo-[acyl-carrier-protein] synthase.